The chain runs to 767 residues: ATP-dependent rRNA helicase SPB4 (767 aa).

Residues 28-56 (WTKLTPPLTPWVVSLLSDLGFGQMTPVQA) carry the Q motif motif. The Helicase ATP-binding domain occupies 59–291 (IPLFVSHKDV…RIGLRNPVRV (233 aa)). 72–79 (AVTGSGKT) lines the ATP pocket. Positions 132 to 176 (HVQAQQQQDQDEQDEQDEQEAQSDSDTDPDASTALNNKRKSSNHL) are disordered. Over residues 140-160 (DQDEQDEQDEQEAQSDSDTDP) the composition is skewed to acidic residues. A DEAD box motif is present at residues 239–242 (DEAD). The region spanning 330–507 (QLARIVLFES…ILEPAEDDAS (178 aa)) is the Helicase C-terminal domain. Residues 609–767 (KLSGDQAKPP…NADAEPFFVI (159 aa)) form a disordered region. Composition is skewed to basic and acidic residues over residues 636–645 (CDSHDSDDAH) and 659–681 (LERE…ANRE). The stretch at 654–746 (KNKRKLEREK…RANSDNDDAM (93 aa)) forms a coiled coil. Over residues 690–700 (LKTQAAESSSN) the composition is skewed to polar residues. A compositionally biased stretch (basic and acidic residues) spans 701–746 (AKHEPPQDDHDEHDWNDDYRKLQKDKRQQRQRNKADRANSDNDDAM). The segment covering 749-761 (NSDSDAAAANADA) has biased composition (low complexity).

The protein belongs to the DEAD box helicase family. DDX55/SPB4 subfamily. In terms of assembly, component of pre-60S ribosomal complexes.

The protein localises to the nucleus. Its subcellular location is the nucleolus. It catalyses the reaction ATP + H2O = ADP + phosphate + H(+). In terms of biological role, ATP-binding RNA helicase involved in the biogenesis of 60S ribosomal subunits. Binds 90S pre-ribosomal particles and dissociates from pre-60S ribosomal particles after processing of 27SB pre-rRNA. Required for the normal formation of 18S rRNA through the processing of pre-rRNAs at sites A0, A1 and A2, and the normal formation of 25S and 5.8S rRNAs through the processing of pre-rRNAs at sites C1 and C2. This is ATP-dependent rRNA helicase SPB4 from Mycosarcoma maydis (Corn smut fungus).